The sequence spans 255 residues: Endonuclease V (255 aa).

2 residues coordinate Mg(2+): D42 and D110.

It belongs to the endonuclease V family. Mg(2+) is required as a cofactor.

It is found in the cytoplasm. The enzyme catalyses Endonucleolytic cleavage at apurinic or apyrimidinic sites to products with a 5'-phosphate.. DNA repair enzyme involved in the repair of deaminated bases. Selectively cleaves double-stranded DNA at the second phosphodiester bond 3' to a deoxyinosine leaving behind the intact lesion on the nicked DNA. In Aeropyrum pernix (strain ATCC 700893 / DSM 11879 / JCM 9820 / NBRC 100138 / K1), this protein is Endonuclease V.